Reading from the N-terminus, the 156-residue chain is Protein BUNDLE SHEATH DEFECTIVE 2, chloroplastic (156 aa).

A chloroplast-targeting transit peptide spans 1 to 41 (MNSAALNARTASVAPQPQACHACKCRQLLSRRVPPAQRQVE). Zn(2+)-binding residues include cysteine 78, cysteine 81, cysteine 89, cysteine 92, cysteine 133, cysteine 136, cysteine 144, and cysteine 147.

The protein belongs to the BSD2 chaperone family. Interacts with the RuBisCo large subunit (RbcL) assembled as an intermediate complex made of eight RbcL and eight BSD2 subunits.

It is found in the plastid. The protein localises to the chloroplast stroma. In terms of biological role, chloroplast chaperone required for RuBisCo biogenesis and translational regulation of the RuBisCo large subunit (RbcL). Stabilizes an end-state assembly intermediate of eight RbcL subunits until the small subunits (RBCSs) become available to produce a complete stable RuBisCo complex containing eight small and eight large subunits. The chain is Protein BUNDLE SHEATH DEFECTIVE 2, chloroplastic from Chlamydomonas reinhardtii (Chlamydomonas smithii).